Reading from the N-terminus, the 1125-residue chain is Transient receptor potential cation channel subfamily A member 1 (1125 aa).

Over Met-1–His-721 the chain is Cytoplasmic. ANK repeat units lie at residues Glu-63–Val-94, Tyr-98–Leu-127, Asn-131–Leu-161, Asn-165–Lys-194, Trp-198–Tyr-227, Lys-239–Met-268, Ala-272–Asp-301, Asn-309–Ser-338, and Glu-342–Ile-371. 5 disulfides stabilise this stretch: Cys-193/Cys-666, Cys-463/Cys-666, Cys-609/Cys-622, Cys-622/Cys-666, and Cys-634/Cys-859. The residue at position 395 (Pro-395) is a 4-hydroxyproline; transient. ANK repeat units lie at residues Asp-413 to Ser-442, Asp-446 to Leu-475, His-482 to Ser-511, Asn-514 to Asp-543, and Glu-548 to Leu-577. Cys-415 and Cys-422 together coordinate (E)-cinnamaldehyde. Residue Cys-622 coordinates (E)-cinnamaldehyde. Position 634 is a cysteine sulfenic acid (-SOH); transient; in hyperoxia (Cys-634). (E)-cinnamaldehyde contacts are provided by Cys-642, Cys-666, and Lys-712. Residues Met-722 to Ile-742 traverse the membrane as a helical segment. Residues Gln-743–Thr-767 lie on the Extracellular side of the membrane. 2 N-linked (GlcNAc...) asparagine glycosylation sites follow: Asn-749 and Asn-755. A helical transmembrane segment spans residues Leu-768–Tyr-788. The Cytoplasmic segment spans residues Cys-789 to Tyr-806. Ca(2+)-binding residues include Glu-791, Gln-794, Asn-808, and Glu-811. Residues Asn-807–Leu-827 form a helical membrane-spanning segment. Over Asp-828 to Tyr-832 the chain is Extracellular. The chain crosses the membrane as a helical span at residues Met-833–Leu-853. Residues Gln-854 to Ser-876 lie on the Cytoplasmic side of the membrane. Position 859 is a cysteine sulfenic acid (-SOH); transient; in hyperoxia (Cys-859). The helical transmembrane segment at Thr-877–Phe-897 threads the bilayer. Residues Gln-898 to Pro-904 lie on the Extracellular side of the membrane. The segment at residues Leu-905–Phe-925 is an intramembrane region (pore-forming). Topologically, residues Leu-926 to Pro-937 are extracellular. Residues Val-938–Leu-959 traverse the membrane as a helical segment. Over Ile-960–Ile-1125 the chain is Cytoplasmic. Positions Met-1044–Lys-1073 form a coiled coil. Lys-1048–Lys-1054 is an a 1,2-diacyl-sn-glycero-3-phospho-(1D-myo-inositol) binding site.

This sequence belongs to the transient receptor (TC 1.A.4) family. Homotetramer. Interacts with TMEM100. Interacts with EGLN1. Interacts with the scorpion wasabi receptor toxin at the same site that electrophiles but in a non-covalent manner. TRPA1 activation by electrophiles occurs though covalent modification of specific cysteine residues in the N-terminal cytoplasmic domain. Post-translationally, hydroxylation is required for TRPA1 activity inhibition in normoxia. In hypoxia, the decrease in oxygen concentration diminishes the activity of the hydroxylase EGLN1, thus relieving TRPA1 from inhibition and ultimately leading to channel activation. In terms of processing, oxidation of Cys-634 and Cys-859 in hyperoxia may override the hydroxylase EGLN1-mediated inhibition, causing TRPA1 activation. In terms of tissue distribution, specifically expressed in a subset of nociceptive neurons. Expressed in dorsal root ganglia.

The protein resides in the cell membrane. It catalyses the reaction Ca(2+)(in) = Ca(2+)(out). The enzyme catalyses Mg(2+)(in) = Mg(2+)(out). It carries out the reaction Na(+)(in) = Na(+)(out). The catalysed reaction is K(+)(in) = K(+)(out). It catalyses the reaction Zn(2+)(in) = Zn(2+)(out). With respect to regulation, electrophilic ligands activate the channel by covalent modification of intracellular cysteines; Cys-622 plays a key role in covalent binding of electrophiles. Extracellular Ca(2+) both potentiates and inactivates TRPA1; a rapid potentiation follows by slow desensitization. Activated by increase in intracellular Ca(2+) concentration. Inhibited by ruthenium red, a potent blocker of TRPV channels and selectively by A-967079. Activated by benzyl isothiocyanate (BITC), iodoacetamide, sulfhydryl reactive agent MTSEA, N-methyl maleimide (NMM), N-ethylmaleimide (NEM), and 2-aminoethyldiphenylborinate (2-APB). Also activated by hyperoxia. Acivated by intracellular Zn(2+). TRPA1 activation may critically depend on the presence of small intracellular compounds such as polyphosphates. Functionally, ligand-activated Ca(2+)-permeable, nonselective cation channel. Involved in pain detection and possibly also in cold perception, oxygen concentration perception, cough, itch, and inner ear function. Has a relatively high Ca(2+) selectivity, with a preference for divalent over monovalent cations (Ca(2+) &gt; Ba(2+) &gt; Mg(2+) &gt; NH4(+) &gt; Li(+) &gt; K(+)), the influx of cation into the cytoplasm, leads to membrane depolarization. Has a central role in the pain response to endogenous inflammatory mediators, such as bradykinin and to a diverse array of irritants. Activated by a large variety of structurally unrelated electrophilic and non-electrophilic chemical compounds, such as allylthiocyanate (AITC) from mustard oil or wasabi, cinnamaldehyde, diallyl disulfide (DADS) from garlic, and acrolein, an environmental irritant. Electrophilic ligands activate TRPA1 by interacting with critical N-terminal Cys residues in a covalent manner. Non-electrophile agonists bind at distinct sites in the transmembrane domain to promote channel activation. Also acts as an ionotropic cannabinoid receptor by being activated by delta(9)-tetrahydrocannabinol (THC), the psychoactive component of marijuana. May be a component for the mechanosensitive transduction channel of hair cells in inner ear, thereby participating in the perception of sounds. The chain is Transient receptor potential cation channel subfamily A member 1 from Rattus norvegicus (Rat).